Consider the following 225-residue polypeptide: MQKKAVILYSGGLDSTTCLAIAKEQGFAPYALSFSYGQRHQQELEVAKLNARPMGAVDHLLVEFDLRKMGGSALTSDIEVPKEGVGEEIPVTYVPARNTIFLSFALGWAETLDCFDIFIGVNALDYSGYPDCRPEFISAYETMANLATKAGVEGKRLKIHTPLISLTKAEIIQKGLSLGVDYSKTHSCYDPAEDGAACGRCDSCRLRLKGFAEAGVTDPVKYQKL.

9-19 is an ATP binding site; it reads YSGGLDSTTCL. Zn(2+) contacts are provided by Cys-188, Cys-198, Cys-201, and Cys-204.

The protein belongs to the QueC family. It depends on Zn(2+) as a cofactor.

The catalysed reaction is 7-carboxy-7-deazaguanine + NH4(+) + ATP = 7-cyano-7-deazaguanine + ADP + phosphate + H2O + H(+). It functions in the pathway purine metabolism; 7-cyano-7-deazaguanine biosynthesis. Functionally, catalyzes the ATP-dependent conversion of 7-carboxy-7-deazaguanine (CDG) to 7-cyano-7-deazaguanine (preQ(0)). The chain is 7-cyano-7-deazaguanine synthase from Citrifermentans bemidjiense (strain ATCC BAA-1014 / DSM 16622 / JCM 12645 / Bem) (Geobacter bemidjiensis).